Consider the following 207-residue polypeptide: Dephospho-CoA kinase (207 aa).

A DPCK domain is found at 8–207 (AIALTGSIGS…LPCVDCVQSS (200 aa)). 16-21 (GSGKST) serves as a coordination point for ATP.

It belongs to the CoaE family.

The protein resides in the cytoplasm. It carries out the reaction 3'-dephospho-CoA + ATP = ADP + CoA + H(+). It participates in cofactor biosynthesis; coenzyme A biosynthesis; CoA from (R)-pantothenate: step 5/5. Its function is as follows. Catalyzes the phosphorylation of the 3'-hydroxyl group of dephosphocoenzyme A to form coenzyme A. The sequence is that of Dephospho-CoA kinase from Helicobacter hepaticus (strain ATCC 51449 / 3B1).